Here is a 120-residue protein sequence, read N- to C-terminus: MEQFTQNQNQPHTQESVQNTNVSQFRNETVINGSPVSGNPDGTDPSGLRRDPVQQHLEAERQERAQIEAGKEICRRRFGGATCDDESAKIHAQFDPNNRSVQPTEFYRFNDHEINKYGYF.

Polar residues predominate over residues M1–S37. Residues M1–A65 form a disordered region. The span at G47–A65 shows a compositional bias: basic and acidic residues.

It belongs to the microviridae B protein family. As to quaternary structure, component of the procapsid complex composed of 60 copies of the internally located B, 240 copies of the external scaffolding protein D, 60 copies of each of the viral structural proteins F and G proteins, and 12 copies of H. The proteolytic cleavage of the internal scaffolding protein B releases the scaffold protein in order to continue virion assembly.

The protein localises to the host cytoplasm. Functionally, participates in the assembly of the viral procapsid in the cytoplasm. Forms first a 12S pre-assembly complex with protein H, and F and G pentamers, then twelve 12S complexes are joined by the D protein to form the procapsid. Internal scaffold protein B is released from the procapsid upon genome packaging. Autoproteolytic activity cleaves protein B and probably facilitates its removal through the pores of the procapsid. The sequence is that of Internal scaffolding protein B (B) from Escherichia coli (Bacteriophage G4).